A 199-amino-acid chain; its full sequence is Holliday junction branch migration complex subunit RuvA (199 aa).

Residues 1-63 are domain I; the sequence is MIAYIEGKLA…EDAHTLFGFA (63 aa). Residues 64-142 are domain II; that stretch reads DLMEKEMFLH…KDALLAGSDS (79 aa). A flexible linker region spans residues 143-151; that stretch reads KQNFSVSHN. Residues 151–199 form a domain III region; the sequence is NSIRSEALTALITLGFTKTVAEKNLDLILKGNSNSFTLEDLIKQALKMS.

It belongs to the RuvA family. In terms of assembly, homotetramer. Forms an RuvA(8)-RuvB(12)-Holliday junction (HJ) complex. HJ DNA is sandwiched between 2 RuvA tetramers; dsDNA enters through RuvA and exits via RuvB. An RuvB hexamer assembles on each DNA strand where it exits the tetramer. Each RuvB hexamer is contacted by two RuvA subunits (via domain III) on 2 adjacent RuvB subunits; this complex drives branch migration. In the full resolvosome a probable DNA-RuvA(4)-RuvB(12)-RuvC(2) complex forms which resolves the HJ.

It localises to the cytoplasm. Its function is as follows. The RuvA-RuvB-RuvC complex processes Holliday junction (HJ) DNA during genetic recombination and DNA repair, while the RuvA-RuvB complex plays an important role in the rescue of blocked DNA replication forks via replication fork reversal (RFR). RuvA specifically binds to HJ cruciform DNA, conferring on it an open structure. The RuvB hexamer acts as an ATP-dependent pump, pulling dsDNA into and through the RuvAB complex. HJ branch migration allows RuvC to scan DNA until it finds its consensus sequence, where it cleaves and resolves the cruciform DNA. In Cytophaga hutchinsonii (strain ATCC 33406 / DSM 1761 / CIP 103989 / NBRC 15051 / NCIMB 9469 / D465), this protein is Holliday junction branch migration complex subunit RuvA.